Consider the following 822-residue polypeptide: Collagen alpha chain CG42342 (822 aa).

Disordered regions lie at residues 1–45 (MRKH…VEAP) and 66–99 (RLAP…KERP). Residues 1–104 (MRKHKAPPSG…SKERPRPTVR (104 aa)) lie on the Cytoplasmic side of the membrane. The segment covering 11 to 25 (SPRTMAQDNSQSEPS) has biased composition (polar residues). A compositionally biased stretch (low complexity) spans 76 to 94 (INNSNNNSNISNNSSNSSS). Residues 105-125 (FISLLHVASYVLCLCAFSFAL) form a helical; Signal-anchor for type II membrane protein membrane-spanning segment. Residues 126 to 822 (YGNVRQTRLE…EYQDNLHNNE (697 aa)) are Extracellular-facing. Residues 131-162 (QTRLEQRMQRLQQLDARIVELELRLEQQQLLH) are a coiled coil. Disordered regions lie at residues 169 to 188 (QVLA…NGSQ), 205 to 297 (VSHL…GHPG), and 345 to 822 (LKGE…HNNE). Positions 194-222 (VRRELHRLRRDVSHLQLTRRQQRRQAAEA) form a coiled coil. Collagen-like domains lie at 241–299 (QPGP…PGMD), 350–409 (GEPG…KGDR), 430–469 (GPPG…GKRG), 493–526 (RGPP…PGSL), 527–586 (GPRG…KGDK), 621–680 (GPPG…SGKA), and 681–740 (GIPG…KGEQ). Positions 242–251 (PGPPGPPGPP) are enriched in pro residues. Positions 284 to 293 (PGDKGQKGDV) are enriched in basic and acidic residues. The span at 360 to 402 (EAGQPGAPGERGPPGEIGAQGPQGEAGQPGVAGPPGVAGAPGT) shows a compositional bias: low complexity. Residues 403–412 (KGDKGDRGDR) are compositionally biased toward basic and acidic residues. Over residues 431–443 (PPGPAGPPGPPGE) the composition is skewed to pro residues. The segment covering 504-517 (KDGRDGRDGSKGEP) has biased composition (basic and acidic residues). Over residues 522–540 (EPGSLGPRGLDGLPGEPGI) the composition is skewed to low complexity. Over residues 567-579 (LMGPPGLPGPPGY) the composition is skewed to pro residues. The span at 583 to 602 (KGDKGDRGDSYRKMRRRQDD) shows a compositional bias: basic and acidic residues. The span at 619–628 (PPGPPGPMGP) shows a compositional bias: pro residues. A compositionally biased stretch (basic and acidic residues) spans 638–655 (RGLDGRKGDPGEKGHKGD). The span at 658–668 (PMGLPGPMGMR) shows a compositional bias: low complexity. A coiled-coil region spans residues 790–822 (TSDYEQEEEEDDEQAEDNENEYDEYQDNLHNNE). Residues 793 to 815 (YEQEEEEDDEQAEDNENEYDEYQ) are compositionally biased toward acidic residues.

The protein resides in the cell membrane. This Drosophila melanogaster (Fruit fly) protein is Collagen alpha chain CG42342.